We begin with the raw amino-acid sequence, 27 residues long: Cupiennin-4b (27 aa).

The residue at position 27 (Q27) is a Glutamine amide.

As to expression, expressed by the venom gland.

It localises to the secreted. This Cupiennius salei (American wandering spider) protein is Cupiennin-4b.